The sequence spans 448 residues: UDP-N-acetylglucosamine--dolichyl-phosphate N-acetylglucosaminephosphotransferase (448 aa).

A helical transmembrane segment spans residues 24 to 44 (ALVAAVGFGIAGYLATDMLIP). Residues 58–60 (KDL) and Glu70 each bind UDP-N-acetyl-alpha-D-glucosamine. A run of 2 helical transmembrane segments spans residues 72–92 (IGAIPAAVYLFVMFIYIPFIF) and 129–149 (YLSAILCLESTVLLGIADDLF). Lys156 lines the dolichyl phosphate pocket. Helical transmembrane passes span 157–177 (FFLPAIAAIPLLMVYYVDFGV) and 202–222 (YVYMASMAIFCPNSINILAGV). Residue 210-218 (IFCPNSINI) coordinates dolichyl phosphate. Residue Asn217 participates in Mg(2+) binding. Asn223 lines the UDP-N-acetyl-alpha-D-glucosamine pocket. 4 consecutive transmembrane segments (helical) span residues 231-251 (IVLAILALLNDLLYFSMGPLA), 256-276 (HRFSAVLIIPFLGVSLALWKW), 283-303 (VFVGDTYCYFAGMVFAVVGIL), and 309-329 (TMLLLFIPQIVNFIYSCPQLF). Asp287 is a Mg(2+) binding site. A UDP-N-acetyl-alpha-D-glucosamine-binding site is contributed by 336–338 (RHR). A run of 2 helical transmembrane segments spans residues 387-407 (EIISTSNMTLINLTLVWFGPM) and 419-439 (LQFCIGILALLGRHAIGAIIF).

Belongs to the glycosyltransferase 4 family. The cofactor is Mg(2+).

It is found in the endoplasmic reticulum membrane. It carries out the reaction a di-trans,poly-cis-dolichyl phosphate + UDP-N-acetyl-alpha-D-glucosamine = an N-acetyl-alpha-D-glucosaminyl-diphospho-di-trans,poly-cis-dolichol + UMP. It participates in protein modification; protein glycosylation. Inhibited by natural nucleoside antibiotic tunicamycin, which acts as a structural analog and competitor of UDP-GlcNAc. UDP-N-acetylglucosamine--dolichyl-phosphate N-acetylglucosaminephosphotransferase that operates in the biosynthetic pathway of dolichol-linked oligosaccharides, the glycan precursors employed in protein asparagine (N)-glycosylation. The assembly of dolichol-linked oligosaccharides begins on the cytosolic side of the endoplasmic reticulum membrane and finishes in its lumen. The sequential addition of sugars to dolichol pyrophosphate produces dolichol-linked oligosaccharides containing fourteen sugars, including two GlcNAcs, nine mannoses and three glucoses. Once assembled, the oligosaccharide is transferred from the lipid to nascent proteins by oligosaccharyltransferases. Catalyzes the initial step of dolichol-linked oligosaccharide biosynthesis, transfering GlcNAc-1-P from cytosolic UDP-GlcNAc onto the carrier lipid dolichyl phosphate (P-dolichol), yielding GlcNAc-P-P-dolichol embedded in the cytoplasmic leaflet of the endoplasmic reticulum membrane. The sequence is that of UDP-N-acetylglucosamine--dolichyl-phosphate N-acetylglucosaminephosphotransferase (ALG7) from Saccharomyces cerevisiae (strain ATCC 204508 / S288c) (Baker's yeast).